Reading from the N-terminus, the 269-residue chain is Tryptophan synthase alpha chain (269 aa).

Catalysis depends on proton acceptor residues Glu49 and Asp60.

This sequence belongs to the TrpA family. Tetramer of two alpha and two beta chains.

It carries out the reaction (1S,2R)-1-C-(indol-3-yl)glycerol 3-phosphate + L-serine = D-glyceraldehyde 3-phosphate + L-tryptophan + H2O. Its pathway is amino-acid biosynthesis; L-tryptophan biosynthesis; L-tryptophan from chorismate: step 5/5. Its function is as follows. The alpha subunit is responsible for the aldol cleavage of indoleglycerol phosphate to indole and glyceraldehyde 3-phosphate. The protein is Tryptophan synthase alpha chain of Acidovorax sp. (strain JS42).